A 40-amino-acid polypeptide reads, in one-letter code: MTLPGGVILVFILVGLACIAIIATIIYRKWQARQRGLQRF.

Positions 1-2 (MT) are excised as a propeptide. Residues 3-26 (LPGGVILVFILVGLACIAIIATII) form a helical membrane-spanning segment. The Cytoplasmic portion of the chain corresponds to 27–40 (YRKWQARQRGLQRF).

In terms of assembly, monomer and homodimer. Associated with the 100 kDa subunit of the plasma membrane H(+)-ATPase.

The protein localises to the cell membrane. This chain is Plasma membrane ATPase proteolipid 1 (PMP1), found in Saccharomyces cerevisiae (strain ATCC 204508 / S288c) (Baker's yeast).